We begin with the raw amino-acid sequence, 95 residues long: Beta-defensin 132 (95 aa).

Positions 1–22 (MKFLLLVLAALGFLTQVIPASG) are cleaved as a signal peptide. 3 disulfides stabilise this stretch: Cys27/Cys55, Cys35/Cys49, and Cys39/Cys56. A disordered region spans residues 72–95 (GNHWPSRSRNTQRKNKKQQTTVTP).

The protein belongs to the beta-defensin family.

The protein localises to the secreted. Functionally, has antibacterial activity. This is Beta-defensin 132 (DEFB132) from Macaca fascicularis (Crab-eating macaque).